Reading from the N-terminus, the 239-residue chain is Dephospho-CoA kinase (239 aa).

The DPCK domain occupies 3 to 206 (IIGLTGSIAS…GGEGGEPAAG (204 aa)). 11–16 (ASGKST) is a binding site for ATP. The interval 197–239 (GGEGGEPAAGSSAHHGAGSVDPGAGPCDGPGAAPEAERRGGDR) is disordered. Positions 204 to 230 (AAGSSAHHGAGSVDPGAGPCDGPGAAP) are enriched in low complexity.

Belongs to the CoaE family.

The protein resides in the cytoplasm. The catalysed reaction is 3'-dephospho-CoA + ATP = ADP + CoA + H(+). It functions in the pathway cofactor biosynthesis; coenzyme A biosynthesis; CoA from (R)-pantothenate: step 5/5. In terms of biological role, catalyzes the phosphorylation of the 3'-hydroxyl group of dephosphocoenzyme A to form coenzyme A. This chain is Dephospho-CoA kinase, found in Symbiobacterium thermophilum (strain DSM 24528 / JCM 14929 / IAM 14863 / T).